A 243-amino-acid polypeptide reads, in one-letter code: Zinc import ATP-binding protein ZnuC (243 aa).

The 218-residue stretch at 8–225 (LNLSNVSYYI…SEFQKLFGHH (218 aa)) folds into the ABC transporter domain. ATP is bound at residue 40–47 (GPNGAGKS).

This sequence belongs to the ABC transporter superfamily. Zinc importer (TC 3.A.1.15.5) family. The complex is composed of two ATP-binding proteins (ZnuC), two transmembrane proteins (ZnuB) and a solute-binding protein (ZnuA).

It is found in the cell inner membrane. It carries out the reaction Zn(2+)(out) + ATP(in) + H2O(in) = Zn(2+)(in) + ADP(in) + phosphate(in) + H(+)(in). Part of the ABC transporter complex ZnuABC involved in zinc import. Responsible for energy coupling to the transport system. This is Zinc import ATP-binding protein ZnuC from Psychrobacter cryohalolentis (strain ATCC BAA-1226 / DSM 17306 / VKM B-2378 / K5).